The primary structure comprises 860 residues: Ubiquitin carboxyl-terminal hydrolase 13 (860 aa).

Residues 168–276 (QVSRHARSLR…EHLLHFGIDM (109 aa)) form a UBP-type; degenerate zinc finger. Zn(2+) is bound by residues Cys-192, Cys-195, Cys-212, and His-225. In terms of domain architecture, USP spans 318 to 857 (TGIKNLGNSC…LGYMYFYRRL (540 aa)). Cys-327 acts as the Nucleophile in catalysis. A disordered region spans residues 611–636 (DLTPPIVIPEDTRDSSTNNSLESPEI). UBA domains are found at residues 635–676 (EIDE…IIAH) and 710–750 (QPPE…IFTH). Residues 755–768 (DESEAMSDTADTEP) are compositionally biased toward acidic residues. The interval 755 to 795 (DESEAMSDTADTEPNDNSFSNANAHTDSSLSPDQDLSSPRV) is disordered. A compositionally biased stretch (polar residues) spans 769-780 (NDNSFSNANAHT). A compositionally biased stretch (low complexity) spans 781–793 (DSSLSPDQDLSSP). His-819 serves as the catalytic Proton acceptor.

It belongs to the peptidase C19 family.

The catalysed reaction is Thiol-dependent hydrolysis of ester, thioester, amide, peptide and isopeptide bonds formed by the C-terminal Gly of ubiquitin (a 76-residue protein attached to proteins as an intracellular targeting signal).. Specifically inhibited by spautin-1 (specific and potent autophagy inhibitor-1), a derivative of MBCQ that binds to usp13 and inhibits deubiquitinase activity. Its function is as follows. Deubiquitinase that mediates deubiquitination of target proteins and is involved in various processes such as autophagy and endoplasmic reticulum-associated degradation (ERAD). In Danio rerio (Zebrafish), this protein is Ubiquitin carboxyl-terminal hydrolase 13 (usp13).